A 710-amino-acid polypeptide reads, in one-letter code: DNA-directed RNA polymerase III subunit RPC5 (710 aa).

Positions 146 to 155 (DAKHREREAA) are enriched in basic and acidic residues. Positions 146 to 169 (DAKHREREAANEAGDSSQDEAEED) are disordered. Residues Ser-161 and Ser-162 each carry the phosphoserine modification. Residue Lys-171 forms a Glycyl lysine isopeptide (Lys-Gly) (interchain with G-Cter in SUMO2) linkage. At Ser-192 the chain carries Phosphoserine. At Tyr-224 the chain carries Phosphotyrosine. Lys-432 participates in a covalent cross-link: Glycyl lysine isopeptide (Lys-Gly) (interchain with G-Cter in SUMO2). A Glycyl lysine isopeptide (Lys-Gly) (interchain with G-Cter in SUMO1); alternate cross-link involves residue Lys-498. Residue Lys-498 forms a Glycyl lysine isopeptide (Lys-Gly) (interchain with G-Cter in SUMO2); alternate linkage. The disordered stretch occupies residues 498–526 (KEEPLSEEEADGAELEAEEEEPMDTAPST). Residues 502–520 (LSEEEADGAELEAEEEEPM) show a composition bias toward acidic residues. Ser-503 is modified (phosphoserine). The interval 558 to 710 (NPVACELKAF…MWYLKGTVQS (153 aa)) is required for Pol III complex stability. Residue Lys-661 forms a Glycyl lysine isopeptide (Lys-Gly) (interchain with G-Cter in SUMO2) linkage.

As to quaternary structure, component of the RNA polymerase III complex consisting of at least 17 subunits: a ten-subunit horseshoe-shaped catalytic core composed of POLR3A/RPC1, POLR3B/RPC2, POLR1C/RPAC1, POLR1D/RPAC2, POLR3K/RPC10, POLR2E/RPABC1, POLR2F/RPABC2, POLR2H/RPABC3, POLR2K/RPABC4 and POLR2L/RPABC5; the stalk composed of two subunits POLR3H/RPC8 and CRCP/RPC9, forming a structural mobile part that protrudes out of the core and functions primarily in transcription initiation; and additional subunits homologous to general transcription factors of the RNA polymerase II machinery, POLR3D/RPC4-POLR3E/RPC5 heterodimer and POLR3/CRPC3-POLR3F/RPC6-POLR3G/RPC7 heterotrimer.

The protein localises to the nucleus. DNA-dependent RNA polymerase catalyzes the transcription of DNA into RNA using the four ribonucleoside triphosphates as substrates. Specific peripheric component of RNA polymerase III (Pol III) which synthesizes small non-coding RNAs including 5S rRNA, snRNAs, tRNAs and miRNAs from at least 500 distinct genomic loci. Assembles with POLR3D/RPC4 forming a subcomplex that binds the Pol III core. Enables recruitment of Pol III at transcription initiation site and drives transcription initiation from both type 2 and type 3 DNA promoters. Required for efficient transcription termination and reinitiation. Plays a key role in sensing and limiting infection by intracellular bacteria and DNA viruses. Acts as a nuclear and cytosolic DNA sensor involved in innate immune response. Can sense non-self dsDNA that serves as template for transcription into dsRNA. The non-self RNA polymerase III transcripts, such as Epstein-Barr virus-encoded RNAs (EBERs) induce type I interferon and NF-kappa-B through the RIG-I pathway. The sequence is that of DNA-directed RNA polymerase III subunit RPC5 from Mus musculus (Mouse).